The following is a 154-amino-acid chain: Protein X (154 aa).

A mitochondrial targeting sequence region spans residues 68 to 117 (PCALRFTSARRMETTVNAHQILPKVLHKRTLGLPAMSTTDLEAYFKDCVF).

Belongs to the orthohepadnavirus protein X family. As to quaternary structure, may form homodimer. May interact with host CEBPA, CFLAR, CREB1, DDB1, E4F1, HBXIP, HSPD1/HSP60, NFKBIA, POLR2E and SMAD4. Interacts with host SMC5-SMC6 complex and induces its degradation. Interacts with host TRPC4AP; leading to prevent ubiquitination of TRPC4AP. Interacts with host PLSCR1; this interaction promotes ubiquitination and degradation of HBx and impairs HBx-mediated cell proliferation. In terms of processing, a fraction may be phosphorylated in insect cells and HepG2 cells, a human hepatoblastoma cell line. Phosphorylated in vitro by host protein kinase C or mitogen-activated protein kinase. N-acetylated in insect cells.

The protein resides in the host cytoplasm. Its subcellular location is the host nucleus. The protein localises to the host mitochondrion. Its function is as follows. Multifunctional protein that plays a role in silencing host antiviral defenses and promoting viral transcription. Does not seem to be essential for HBV infection. May be directly involved in development of cirrhosis and liver cancer (hepatocellular carcinoma). Most of cytosolic activities involve modulation of cytosolic calcium. The effect on apoptosis is controversial depending on the cell types in which the studies have been conducted. May induce apoptosis by localizing in mitochondria and causing loss of mitochondrial membrane potential. May also modulate apoptosis by binding host CFLAR, a key regulator of the death-inducing signaling complex (DISC). Promotes viral transcription by using the host E3 ubiquitin ligase DDB1 to target the SMC5-SMC6 complex to proteasomal degradation. This host complex would otherwise bind to viral episomal DNA, and prevents its transcription. Moderately stimulates transcription of many different viral and cellular transcription elements. Promoters and enhancers stimulated by HBx contain DNA binding sites for NF-kappa-B, AP-1, AP-2, c-EBP, ATF/CREB, or the calcium-activated factor NF-AT. The protein is Protein X of Homo sapiens (Human).